Consider the following 349-residue polypeptide: Biotin synthase (349 aa).

Positions 60–287 (GDVELATLLS…KARVRLSAGR (228 aa)) constitute a Radical SAM core domain. 3 residues coordinate [4Fe-4S] cluster: C75, C79, and C82. 4 residues coordinate [2Fe-2S] cluster: C119, C150, C210, and R282.

This sequence belongs to the radical SAM superfamily. Biotin synthase family. Homodimer. The cofactor is [4Fe-4S] cluster. [2Fe-2S] cluster serves as cofactor.

The enzyme catalyses (4R,5S)-dethiobiotin + (sulfur carrier)-SH + 2 reduced [2Fe-2S]-[ferredoxin] + 2 S-adenosyl-L-methionine = (sulfur carrier)-H + biotin + 2 5'-deoxyadenosine + 2 L-methionine + 2 oxidized [2Fe-2S]-[ferredoxin]. It functions in the pathway cofactor biosynthesis; biotin biosynthesis; biotin from 7,8-diaminononanoate: step 2/2. Catalyzes the conversion of dethiobiotin (DTB) to biotin by the insertion of a sulfur atom into dethiobiotin via a radical-based mechanism. This is Biotin synthase from Albidiferax ferrireducens (strain ATCC BAA-621 / DSM 15236 / T118) (Rhodoferax ferrireducens).